We begin with the raw amino-acid sequence, 387 residues long: 3-ketoacyl-CoA thiolase (387 aa).

The Acyl-thioester intermediate role is filled by C91. Catalysis depends on proton acceptor residues H343 and C373.

It belongs to the thiolase-like superfamily. Thiolase family. As to quaternary structure, heterotetramer of two alpha chains (FadB) and two beta chains (FadA).

The protein localises to the cytoplasm. The enzyme catalyses an acyl-CoA + acetyl-CoA = a 3-oxoacyl-CoA + CoA. Its pathway is lipid metabolism; fatty acid beta-oxidation. Functionally, catalyzes the final step of fatty acid oxidation in which acetyl-CoA is released and the CoA ester of a fatty acid two carbons shorter is formed. The polypeptide is 3-ketoacyl-CoA thiolase (Shewanella sp. (strain ANA-3)).